The sequence spans 370 residues: MPHQQILMLFGLLPVATNISTWWNFGSMLLACLTLQLLTGFFLAVHYTANINLAFSSIIHITRDVPYGWMMQNLHAIGASMFFICIYIHIARGLYYGSYLNKETWLSGTTLLIMLMATAFFGYVLPWGQMSFWAATVITNLLTAIPYLGSTMTTWLWGGFAINDPTLTRFFALHFILPFGIISLSSLHILLLHEEGSSNPLGTNSDIDKIPFHPYQTYKDMLMLTIMTIMLLTIVSFFPDIFNDPDNFSKANPLVTPQHIKPEWYFLFAYGILRSIPNKLGGALALTMSIMILLTMPFTHTSKLRSMMFRPLMQLTFWTFTATFLVISWTATKPVEPPFTTISQVAALMYFLFFISNPIMGWLENKIMKL.

The next 4 membrane-spanning stretches (helical) occupy residues 25–45, 69–90, 105–125, and 170–190; these read FGSMLLACLTLQLLTGFFLAV, WMMQNLHAIGASMFFICIYIHI, WLSGTTLLIMLMATAFFGYVL, and FFALHFILPFGIISLSSLHIL. 2 residues coordinate heme b: H75 and H89. Residues H174 and H188 each contribute to the heme b site. H193 is an a ubiquinone binding site. Helical transmembrane passes span 218–238, 280–300, 312–332, and 339–358; these read YKDMLMLTIMTIMLLTIVSFF, LGGALALTMSIMILLTMPFTH, LMQLTFWTFTATFLVISWTAT, and FTTISQVAALMYFLFFISNP.

Belongs to the cytochrome b family. The cytochrome bc1 complex contains 3 respiratory subunits (MT-CYB, CYC1 and UQCRFS1), 2 core proteins (UQCRC1 and UQCRC2) and probably 6 low-molecular weight proteins. Requires heme b as cofactor.

It localises to the mitochondrion inner membrane. Component of the ubiquinol-cytochrome c reductase complex (complex III or cytochrome b-c1 complex) that is part of the mitochondrial respiratory chain. The b-c1 complex mediates electron transfer from ubiquinol to cytochrome c. Contributes to the generation of a proton gradient across the mitochondrial membrane that is then used for ATP synthesis. The chain is Cytochrome b (MT-CYB) from Chilabothrus striatus (Haitian boa constrictor).